The primary structure comprises 301 residues: NAD kinase (301 aa).

The active-site Proton acceptor is Asp81. NAD(+) contacts are provided by residues 81–82, 155–156, His166, Arg183, Asp185, 196–201, and Gln256; these read DG, NE, and TAYSLS.

The protein belongs to the NAD kinase family. A divalent metal cation is required as a cofactor.

It localises to the cytoplasm. It catalyses the reaction NAD(+) + ATP = ADP + NADP(+) + H(+). Functionally, involved in the regulation of the intracellular balance of NAD and NADP, and is a key enzyme in the biosynthesis of NADP. Catalyzes specifically the phosphorylation on 2'-hydroxyl of the adenosine moiety of NAD to yield NADP. This is NAD kinase from Mannheimia succiniciproducens (strain KCTC 0769BP / MBEL55E).